We begin with the raw amino-acid sequence, 406 residues long: Dual-specificity RNA methyltransferase RlmN (406 aa).

The Proton acceptor role is filled by Glu121. Residues 127-377 (ERDRGTLCVS…VRTPRGRDIL (251 aa)) enclose the Radical SAM core domain. Residues Cys134 and Cys380 are joined by a disulfide bond. 3 residues coordinate [4Fe-4S] cluster: Cys141, Cys145, and Cys148. Residues 206-207 (GE), Ser238, 260-262 (SLH), and Asn337 each bind S-adenosyl-L-methionine. The S-methylcysteine intermediate role is filled by Cys380.

It belongs to the radical SAM superfamily. RlmN family. It depends on [4Fe-4S] cluster as a cofactor.

The protein resides in the cytoplasm. It catalyses the reaction adenosine(2503) in 23S rRNA + 2 reduced [2Fe-2S]-[ferredoxin] + 2 S-adenosyl-L-methionine = 2-methyladenosine(2503) in 23S rRNA + 5'-deoxyadenosine + L-methionine + 2 oxidized [2Fe-2S]-[ferredoxin] + S-adenosyl-L-homocysteine. The enzyme catalyses adenosine(37) in tRNA + 2 reduced [2Fe-2S]-[ferredoxin] + 2 S-adenosyl-L-methionine = 2-methyladenosine(37) in tRNA + 5'-deoxyadenosine + L-methionine + 2 oxidized [2Fe-2S]-[ferredoxin] + S-adenosyl-L-homocysteine. Specifically methylates position 2 of adenine 2503 in 23S rRNA and position 2 of adenine 37 in tRNAs. m2A2503 modification seems to play a crucial role in the proofreading step occurring at the peptidyl transferase center and thus would serve to optimize ribosomal fidelity. This Azorhizobium caulinodans (strain ATCC 43989 / DSM 5975 / JCM 20966 / LMG 6465 / NBRC 14845 / NCIMB 13405 / ORS 571) protein is Dual-specificity RNA methyltransferase RlmN.